Here is a 339-residue protein sequence, read N- to C-terminus: DNA repair protein RAD51 homolog 1 (339 aa).

The disordered stretch occupies residues 1-22 (MAMQMQLEASADTSVEEESFGP). Position 2 is an N-acetylalanine (Ala-2). Thr-13 is subject to Phosphothreonine. At Ser-14 the chain carries Phosphoserine. In terms of domain architecture, HhH spans 48 to 77 (TVEAVAYAPKKELINIKGISEAKADKILTE). A Phosphotyrosine; by ABL1 modification is found at Tyr-54. Residues Lys-58 and Lys-64 each participate in a glycyl lysine isopeptide (Lys-Gly) (interchain with G-Cter in ubiquitin) cross-link. An ATP-binding site is contributed by 127 to 134 (GEFRTGKT). The segment at 184-257 (DVLDNVAYAR…FLRMLLRLAD (74 aa)) is interaction with PALB2. A Nuclear export signal; masked by the interaction with BRCA2 motif is present at residues 245 to 260 (LARFLRMLLRLADEFG). Position 309 is a phosphothreonine; by CHEK1 (Thr-309).

The protein belongs to the RecA family. RAD51 subfamily. Forms linear homooligomers, giving rise to a RAD51 nucleoprotein filament, which is essential for strand-pairing reactions during DNA recombination. Interacts with BRCA1 and either directly or indirectly with p53. Interacts with XRCC3, RAD54L and RAD54B. Interacts with the BCDX2 subcomplex RAD51C:RAD51B. Component of the homologous recombination repair (HR) complex composed of ERCC5/XPG, BRCA2, PALB2, DSS1 and RAD51. Interacts directly with PALB2 which may serve as a scaffold for a HR complex containing PALB2, BRCA2, RAD51C, RAD51 and XRCC3. Interacts with RAD51AP1 and RAD51AP2. Interacts with CHEK1, and this may require prior phosphorylation of CHEK1. Interacts with the MND1-PSMC3IP heterodimer. Found in a complex, at least composed of BLM, RAD51 and SPIDR; the complex formation is mediated by SPIDR. Interacts with SPIDR; the interaction is direct and recruits RAD51 to DNA damage sites. Interacts with FIGNL1 (via N-terminal one-half region); the interaction is direct. Interacts with RAD51AP1 (via C-terminal region); the interaction is direct. Interacts with NABP2, RPA1, PALB2 and RAD51. Interacts with SWI5/C9orf119, and at lower level with SFR1/MEIR5. Interacts with hyperphosphorylated RPA2; this interaction is necessary for efficient recruitment to chromatin in response to DNA damage. Interacts with SWSAP1; involved in homologous recombination repair. Interacts with PARPBP, BRCA2 and RECQL5; these interactions interfere with the formation of the RAD51-DNA homologous recombination structure. Interacts with POLQ; POLQ acts as an inhibitor of homology-recombination repair (HR) pathway by limiting RAD51 accumulation at resected ends. Interacts with POLN. Interacts with FBH1. Interacts with RFWD3. Interacts with the MCM8-MCM9 complex; the interaction recruits RAD51 to DNA damage sites. Component of a multiprotein complex with MEIOB and SPATA22. Interacts with the complex BRME1:HSF2BP:BRCA2. Interacts with HELQ; stimulating HELQ DNA helicase activity and ability to unwing DNA. Interacts with MMS22L; the interaction is direct and promotes recruitment of RAD51 to sites of DNA damage. Interacts with the ATAD5 RFC-like complex. Within the ATAD5 RFC-like complex, interacts with ATAD5 (via N-terminus); the interaction is direct and enhanced under replication stress. Interacts with WDR48; the interaction is enhanced under replication stress. Interacts with DNA helicase ZGRF1; the interaction promotes RAD51 strand exchange activity. Interacts (when phosphorylated) with TOPBP1; interaction takes place following phosphorylation by CK2 and PLK1 and promotes recruitment to DNA damage sites. Interacts with GRB2; this interaction inhibits RAD51 ATPase activity to stabilize RAD51 on stalled replication forks. Post-translationally, ubiquitinated by the SCF(FBH1) E3 ubiquitin ligase complex, regulating RAD51 subcellular location and preventing its association with DNA. Ubiquitinated by RFWD3 in response to DNA damage: ubiquitination leads to degradation by the proteasome, promoting homologous recombination. Phosphorylation of Thr-309 by CHEK1 may enhance association with chromatin at sites of DNA damage and promote DNA repair by homologous recombination. Phosphorylated at Ser-14 by PLK1, triggering phosphorylation at Thr-13 by CK2, thereby promoting interaction with TOPBP1 and recruitment to DNA damage sites during S-phase. Phosphorylation by ABL1 inhibits function. In terms of tissue distribution, expressed in the testes (at protein level). Expressed in the brain (at protein level). Expressed in the thymus, spleen, ovary and small intestine.

It localises to the nucleus. Its subcellular location is the cytoplasm. The protein localises to the perinuclear region. It is found in the mitochondrion matrix. The protein resides in the chromosome. It localises to the cytoskeleton. Its subcellular location is the microtubule organizing center. The protein localises to the centrosome. Functionally, plays an important role in homologous strand exchange, a key step in DNA repair through homologous recombination (HR). Binds to single-stranded DNA in an ATP-dependent manner to form nucleoprotein filaments which are essential for the homology search and strand exchange. Catalyzes the recognition of homology and strand exchange between homologous DNA partners to form a joint molecule between a processed DNA break and the repair template. Recruited to resolve stalled replication forks during replication stress. Part of a PALB2-scaffolded HR complex containing BRCA2 and RAD51C and which is thought to play a role in DNA repair by HR. Plays a role in regulating mitochondrial DNA copy number under conditions of oxidative stress in the presence of RAD51C and XRCC3. Also involved in interstrand cross-link repair. This chain is DNA repair protein RAD51 homolog 1, found in Mus musculus (Mouse).